A 318-amino-acid polypeptide reads, in one-letter code: Glutathione synthetase (318 aa).

Residues 125 to 311 (EKLFTAWFPE…ITGKLMDAIE (187 aa)) enclose the ATP-grasp domain. 151 to 208 (FRQEHGDIILKPLDGMGGASIFRVKENDPNVSVIIETLTNHGQNYAMAQTFVPDISNG) serves as a coordination point for ATP. The Mg(2+) site is built by Glu-282 and Asn-284.

The protein belongs to the prokaryotic GSH synthase family. Mg(2+) is required as a cofactor. It depends on Mn(2+) as a cofactor.

The catalysed reaction is gamma-L-glutamyl-L-cysteine + glycine + ATP = glutathione + ADP + phosphate + H(+). It functions in the pathway sulfur metabolism; glutathione biosynthesis; glutathione from L-cysteine and L-glutamate: step 2/2. This is Glutathione synthetase from Vibrio vulnificus (strain YJ016).